A 522-amino-acid polypeptide reads, in one-letter code: Probable protein kinase UbiB (522 aa).

The Protein kinase domain occupies 119-497 (SFERVPVASA…QRRTNRLLQS (379 aa)). Residues 125-133 (VASASIAQV) and K151 each bind ATP. D286 acts as the Proton acceptor in catalysis. The chain crosses the membrane as a helical span at residues 496–516 (QSIIYGGMGFVLGLLALQFLI).

It belongs to the ABC1 family. UbiB subfamily.

It localises to the cell inner membrane. The protein operates within cofactor biosynthesis; ubiquinone biosynthesis [regulation]. Functionally, is probably a protein kinase regulator of UbiI activity which is involved in aerobic coenzyme Q (ubiquinone) biosynthesis. The protein is Probable protein kinase UbiB of Paracidovorax citrulli (strain AAC00-1) (Acidovorax citrulli).